A 292-amino-acid chain; its full sequence is 33 kDa chaperonin (292 aa).

2 cysteine pairs are disulfide-bonded: Cys230-Cys232 and Cys263-Cys266.

The protein belongs to the HSP33 family. Post-translationally, under oxidizing conditions two disulfide bonds are formed involving the reactive cysteines. Under reducing conditions zinc is bound to the reactive cysteines and the protein is inactive.

It localises to the cytoplasm. Redox regulated molecular chaperone. Protects both thermally unfolding and oxidatively damaged proteins from irreversible aggregation. Plays an important role in the bacterial defense system toward oxidative stress. This is 33 kDa chaperonin from Serratia proteamaculans (strain 568).